The sequence spans 192 residues: Protein GrpE (192 aa).

The segment at Met-1–Gly-34 is disordered. Over residues Ala-21–Thr-31 the composition is skewed to polar residues.

The protein belongs to the GrpE family. In terms of assembly, homodimer.

The protein localises to the cytoplasm. Participates actively in the response to hyperosmotic and heat shock by preventing the aggregation of stress-denatured proteins, in association with DnaK and GrpE. It is the nucleotide exchange factor for DnaK and may function as a thermosensor. Unfolded proteins bind initially to DnaJ; upon interaction with the DnaJ-bound protein, DnaK hydrolyzes its bound ATP, resulting in the formation of a stable complex. GrpE releases ADP from DnaK; ATP binding to DnaK triggers the release of the substrate protein, thus completing the reaction cycle. Several rounds of ATP-dependent interactions between DnaJ, DnaK and GrpE are required for fully efficient folding. The protein is Protein GrpE of Yersinia enterocolitica serotype O:8 / biotype 1B (strain NCTC 13174 / 8081).